The sequence spans 496 residues: Lysosomal Pro-X carboxypeptidase (496 aa).

Positions 1 to 21 (MGRRALLLLLLSFLAPWTTIA) are cleaved as a signal peptide. Positions 22-45 (LRPALRALGSLHLPTNPTSLPAVA) are excised as a propeptide. 2 N-linked (GlcNAc...) asparagine glycosylation sites follow: N47 and N101. Catalysis depends on S179, which acts as the Charge relay system. Positions 194 to 334 (HMVVGALAAS…QNIFQALNVY (141 aa)) are SKS domain. Intrachain disulfides connect C215–C372, C233–C310, C264–C343, and C364–C394. Residues N317, N336, and N345 are each glycosylated (N-linked (GlcNAc...) asparagine). N415 carries N-linked (GlcNAc...) asparagine glycosylation. Residues D430 and H455 each act as charge relay system in the active site.

Belongs to the peptidase S28 family. Homodimer.

It is found in the lysosome. The catalysed reaction is Cleavage of a -Pro-|-Xaa bond to release a C-terminal amino acid.. In terms of biological role, cleaves C-terminal amino acids linked to proline in peptides such as angiotensin II, III and des-Arg9-bradykinin. This cleavage occurs at acidic pH, but enzymatic activity is retained with some substrates at neutral pH. This Pongo abelii (Sumatran orangutan) protein is Lysosomal Pro-X carboxypeptidase (PRCP).